A 188-amino-acid polypeptide reads, in one-letter code: MTKKTSHHKAEQKEKRAGEESGRESEVLDHKIEELENELIGAREQADKLREELLRKAAEFENFRRQKEREALMAGSRTLETVIRELLPFVDDVVRIVEHAPELLEKTEDARPYVDGAELLKKNLVRWLEDKGVTRIDALGKKMDVNLHEAITQVEYPDVEPETVVEVFQDGYVLGDRVLRHTKVVVAK.

The interval 1 to 30 (MTKKTSHHKAEQKEKRAGEESGRESEVLDH) is disordered. Residues 8-30 (HKAEQKEKRAGEESGRESEVLDH) are compositionally biased toward basic and acidic residues.

The protein belongs to the GrpE family. In terms of assembly, homodimer.

It is found in the cytoplasm. Functionally, participates actively in the response to hyperosmotic and heat shock by preventing the aggregation of stress-denatured proteins, in association with DnaK and GrpE. It is the nucleotide exchange factor for DnaK and may function as a thermosensor. Unfolded proteins bind initially to DnaJ; upon interaction with the DnaJ-bound protein, DnaK hydrolyzes its bound ATP, resulting in the formation of a stable complex. GrpE releases ADP from DnaK; ATP binding to DnaK triggers the release of the substrate protein, thus completing the reaction cycle. Several rounds of ATP-dependent interactions between DnaJ, DnaK and GrpE are required for fully efficient folding. The sequence is that of Protein GrpE from Chlorobium phaeobacteroides (strain BS1).